A 187-amino-acid chain; its full sequence is Ribosome-recycling factor (187 aa).

It belongs to the RRF family.

The protein localises to the cytoplasm. Functionally, responsible for the release of ribosomes from messenger RNA at the termination of protein biosynthesis. May increase the efficiency of translation by recycling ribosomes from one round of translation to another. The protein is Ribosome-recycling factor of Parabacteroides distasonis (strain ATCC 8503 / DSM 20701 / CIP 104284 / JCM 5825 / NCTC 11152).